The chain runs to 95 residues: Glutamyl-tRNA(Gln) amidotransferase subunit C (95 aa).

This sequence belongs to the GatC family. Heterotrimer of A, B and C subunits.

The enzyme catalyses L-glutamyl-tRNA(Gln) + L-glutamine + ATP + H2O = L-glutaminyl-tRNA(Gln) + L-glutamate + ADP + phosphate + H(+). It carries out the reaction L-aspartyl-tRNA(Asn) + L-glutamine + ATP + H2O = L-asparaginyl-tRNA(Asn) + L-glutamate + ADP + phosphate + 2 H(+). Functionally, allows the formation of correctly charged Asn-tRNA(Asn) or Gln-tRNA(Gln) through the transamidation of misacylated Asp-tRNA(Asn) or Glu-tRNA(Gln) in organisms which lack either or both of asparaginyl-tRNA or glutaminyl-tRNA synthetases. The reaction takes place in the presence of glutamine and ATP through an activated phospho-Asp-tRNA(Asn) or phospho-Glu-tRNA(Gln). The protein is Glutamyl-tRNA(Gln) amidotransferase subunit C of Caulobacter vibrioides (strain ATCC 19089 / CIP 103742 / CB 15) (Caulobacter crescentus).